The primary structure comprises 299 residues: ATP phosphoribosyltransferase (299 aa).

It belongs to the ATP phosphoribosyltransferase family. Long subfamily. In terms of assembly, equilibrium between an active dimeric form, an inactive hexameric form and higher aggregates. Interconversion between the various forms is largely reversible and is influenced by the natural substrates and inhibitors of the enzyme. Mg(2+) serves as cofactor.

The protein localises to the cytoplasm. It catalyses the reaction 1-(5-phospho-beta-D-ribosyl)-ATP + diphosphate = 5-phospho-alpha-D-ribose 1-diphosphate + ATP. Its pathway is amino-acid biosynthesis; L-histidine biosynthesis; L-histidine from 5-phospho-alpha-D-ribose 1-diphosphate: step 1/9. Its activity is regulated as follows. Feedback inhibited by histidine. Its function is as follows. Catalyzes the condensation of ATP and 5-phosphoribose 1-diphosphate to form N'-(5'-phosphoribosyl)-ATP (PR-ATP). Has a crucial role in the pathway because the rate of histidine biosynthesis seems to be controlled primarily by regulation of HisG enzymatic activity. This Blochmanniella floridana protein is ATP phosphoribosyltransferase.